Consider the following 109-residue polypeptide: Period circadian protein (109 aa).

2 stretches are compositionally biased toward polar residues: residues 42–56 and 68–80; these read QSYSTPANTGSNLSP and SSRNCTSGSNLNM. Residues 42-109 form a disordered region; the sequence is QSYSTPANTG…LVTLTESLLK (68 aa). Low complexity predominate over residues 81-97; it reads GSVTNTSNTGTGTSSGS.

Forms a heterodimer with timeless (TIM); the complex then translocates into the nucleus. In terms of processing, phosphorylated with a circadian rhythmicity, probably by the double-time protein (dbt). Phosphorylation could be implicated in the stability of per monomer and in the formation of heterodimer per-tim.

Its subcellular location is the nucleus. It is found in the cytoplasm. The protein localises to the perinuclear region. In terms of biological role, essential for biological clock functions. Determines the period length of circadian and ultradian rhythms; an increase in PER dosage leads to shortened circadian rhythms and a decrease leads to lengthened circadian rhythms. Essential for the circadian rhythmicity of locomotor activity, eclosion behavior, and for the rhythmic component of the male courtship song that originates in the thoracic nervous system. The biological cycle depends on the rhythmic formation and nuclear localization of the TIM-PER complex. Light induces the degradation of TIM, which promotes elimination of PER. Nuclear activity of the heterodimer coordinatively regulates PER and TIM transcription through a negative feedback loop. Behaves as a negative element in circadian transcriptional loop. Does not appear to bind DNA, suggesting indirect transcriptional inhibition. The chain is Period circadian protein (per) from Musca domestica (House fly).